We begin with the raw amino-acid sequence, 1228 residues long: Serine/threonine-protein kinase CST20 (1228 aa).

The span at 1–18 (MSILSENNPTQTSITDPN) shows a compositional bias: polar residues. Disordered stretches follow at residues 1–382 (MSIL…TAHN) and 405–468 (NSTN…HSQE). Composition is skewed to low complexity over residues 57 to 70 (NTTSANTSSLSLGS) and 95 to 123 (ESGSSDIDDSQQSHNNNNNNNNNESNPES). Over residues 148–159 (HQGDDSDNEKQY) the composition is skewed to basic and acidic residues. Polar residues-rich tracts occupy residues 173–195 (DSYSPGTLESPGTLNALETNNVS), 205–222 (TSSLEDLSLSLQHQNENA), and 232–244 (PQVSTSKTSSFHD). Residues 246–255 (SSVISSSTSV) show a composition bias toward low complexity. Polar residues-rich tracts occupy residues 260-275 (SNPTSTRGSHLSSYKS) and 309-328 (DTLSSATNSPNLLRNDTLQG). The segment covering 347–367 (NTSATSRNTSGTSTSTVVKNS) has biased composition (low complexity). Residues 368 to 382 (RSGTSKLTSTSTAHN) show a composition bias toward polar residues. Positions 437–466 (KVRGVFSSMFGKNKSTSSSSSSNSGSNSHS) are enriched in low complexity. Residues 473–486 (ISTPFNAKHLAHVG) enclose the CRIB domain. Disordered regions lie at residues 543–829 (FHFD…ALAD) and 865–917 (LREK…KQAA). Residues 548–559 (NKSSSSGWSNEN) show a composition bias toward polar residues. The span at 568–579 (SNSGSGGGGGGA) shows a compositional bias: gly residues. Residues 602–611 (ITPSQSMPTK) are compositionally biased toward polar residues. Over residues 612 to 626 (TESKQSENQHPHEDN) the composition is skewed to basic and acidic residues. The segment covering 627-640 (ATQYTPRTPTSHVQ) has biased composition (polar residues). 3 stretches are compositionally biased toward low complexity: residues 668-681 (PSSQSLPRSDSQSD), 693-708 (ISPSKIKIRSISSKSL), and 734-747 (SIPKSKSHSASLSS). Residues 748–759 (QLRPATNGSTTA) are compositionally biased toward polar residues. A compositionally biased stretch (pro residues) spans 787 to 805 (APPPPPSASPAPPVPPAPP). Over residues 809–824 (LSEQTSEIPQQRTAPS) the composition is skewed to polar residues. A compositionally biased stretch (basic and acidic residues) spans 865 to 874 (LREKNERQNR). The segment covering 875–890 (QQETGQNNADTASGGS) has biased composition (polar residues). One can recognise a Protein kinase domain in the interval 951-1203 (YVDLVKIGQG…ADELLHDNFI (253 aa)). ATP is bound by residues 957–965 (IGQGASGGV) and lysine 981. The active-site Proton acceptor is the aspartate 1071.

Belongs to the protein kinase superfamily. STE Ser/Thr protein kinase family. STE20 subfamily.

Its subcellular location is the cytoplasm. The protein localises to the nucleus. The enzyme catalyses L-seryl-[protein] + ATP = O-phospho-L-seryl-[protein] + ADP + H(+). The catalysed reaction is L-threonyl-[protein] + ATP = O-phospho-L-threonyl-[protein] + ADP + H(+). MAP4K component of the MAPK pathway required for the mating pheromone response, and the regulation of cell polarity and cell cycle. Phosphorylates histone H2B to form H2BS10ph. Required for hyphal formation and virulence. The protein is Serine/threonine-protein kinase CST20 (CST20) of Candida albicans (strain SC5314 / ATCC MYA-2876) (Yeast).